Consider the following 431-residue polypeptide: Galactose-3-O-sulfotransferase 3 (431 aa).

Topologically, residues 1–19 (MPPILQRLQQATKMMSRRK) are cytoplasmic. The chain crosses the membrane as a helical; Signal-anchor for type II membrane protein span at residues 20 to 40 (ILLLVLGCSTVSLLIHQGAQL). Over 41-431 (SWYPKLFPLS…RVLPRGPQGP (391 aa)) the chain is Lumenal. N-linked (GlcNAc...) asparagine glycosylation is found at asparagine 91, asparagine 110, asparagine 177, and asparagine 302. Residues 399–431 (QKRRGGARARPEPVLDNPPPRPIRVLPRGPQGP) are disordered.

It belongs to the galactose-3-O-sulfotransferase family. Requires Mg(2+) as cofactor. In terms of tissue distribution, highly expressed in thyroid, brain, kidney, heart and spinal cord.

The protein localises to the golgi apparatus. It localises to the golgi stack membrane. The protein operates within protein modification; carbohydrate sulfation. In terms of biological role, transfers a sulfate to position 3 of non-reducing beta-galactosyl residues in N-glycans and core2-branched O-glycans. Has high activity towards Gal-beta-1,4-GlcNAc, Gal-beta-1,4(Fuc-alpha-1,3)GlcNAc and lower activity towards Gal-beta-1,3(Fuc-alpha-1,4)GlcNAc. This is Galactose-3-O-sulfotransferase 3 (GAL3ST3) from Homo sapiens (Human).